A 779-amino-acid chain; its full sequence is Mesenchyme-specific cell surface glycoprotein (779 aa).

An N-terminal signal peptide occupies residues 1–15 (MQFGVPLLVLCLALG). N-linked (GlcNAc...) asparagine glycosylation is found at Asn-203 and Asn-234. The disordered stretch occupies residues 249–363 (AGFPRGTTWS…QYPMIPTTPL (115 aa)). Residues 262–351 (GAGGQGGQGQ…GGQGGQGGGN (90 aa)) are compositionally biased toward gly residues. N-linked (GlcNAc...) asparagine glycosylation is found at Asn-369, Asn-451, and Asn-609.

In terms of tissue distribution, restricted to the primary mesenchyme cell lineage.

Its subcellular location is the cell membrane. Not known. Could be involved in mesenchyme cell migration, adhesion, fusion, or spicule formation. This chain is Mesenchyme-specific cell surface glycoprotein, found in Strongylocentrotus purpuratus (Purple sea urchin).